A 101-amino-acid chain; its full sequence is Urease subunit beta (101 aa).

This sequence belongs to the urease beta subunit family. In terms of assembly, heterotrimer of UreA (gamma), UreB (beta) and UreC (alpha) subunits. Three heterotrimers associate to form the active enzyme.

The protein localises to the cytoplasm. The catalysed reaction is urea + 2 H2O + H(+) = hydrogencarbonate + 2 NH4(+). It functions in the pathway nitrogen metabolism; urea degradation; CO(2) and NH(3) from urea (urease route): step 1/1. The sequence is that of Urease subunit beta from Psychromonas ingrahamii (strain DSM 17664 / CCUG 51855 / 37).